Here is a 215-residue protein sequence, read N- to C-terminus: MGVRLRVWPAAPHSISRCPRPLGAVLSILLAGGSRKGTPTARCLGQRTKEKRVGGRSLRSEAGSGPCPTAGAQPTAPSSAWPPRLRPRTCPQMSGELPRVRPTRVGLSSLGSGPGHPPSGTRMCGERARNRRGRARRLTPEQPRIGASAGPGPPLPPARPRCSGSCHLPRPPQHLSPPQPGRVRMGAAEGSRRADTHHARRRRRARLPAPRSAST.

Positions 35–215 (RKGTPTARCL…RLPAPRSAST (181 aa)) are disordered. The segment covering 169–180 (PRPPQHLSPPQP) has biased composition (pro residues). The necessary for nucleolar localization stretch occupies residues 185–215 (MGAAEGSRRADTHHARRRRRARLPAPRSAST).

Widely expressed.

The protein resides in the nucleus. It localises to the nucleolus. Functionally, apoptosis-inducing protein that modulates the tumor suppressor function of CDKN2A/p14ARF. Enhances the stability of CDKN2A/p14ARF protein by protecting it from degradation. May act as a tumor suppressor. This Homo sapiens (Human) protein is Proapoptotic nucleolar protein 1.